Here is a 159-residue protein sequence, read N- to C-terminus: MGRFIFISFGLLVVFFFLSGAKGSTCPFHWLPMYGLCYKIFDKLKTWNDAEMFCRKYKPGCHLASLHSKRDSIEFAEYISDYRKGWGNVWIGMWGRKEGLTCEWTDGSSTTYVAWKQNLTDHYLNKDLFCAEIVSYTGYRLWNKQDCKVKNAFLCQCGF.

A signal peptide spans 1–23 (MGRFIFISFGLLVVFFFLSGAKG). 4 disulfides stabilise this stretch: cysteine 26/cysteine 37, cysteine 54/cysteine 155, cysteine 61/cysteine 157, and cysteine 130/cysteine 147. The region spanning 33 to 156 (MYGLCYKIFD…CKVKNAFLCQ (124 aa)) is the C-type lectin domain. A glycan (N-linked (GlcNAc...) asparagine) is linked at asparagine 118. Positions 119-121 (LTD) match the Sugar-binding motif. Ca(2+)-binding residues include aspartate 121, aspartate 127, and asparagine 143.

It belongs to the true venom lectin family. Homodimer; disulfide-linked. Expressed by the venom gland.

It localises to the secreted. In terms of biological role, lectin which recognizes specific carbohydrate structures and agglutinates a variety of animal cells by binding to cell-surface glycoproteins and glycolipids. May be a calcium-dependent lectin. The sequence is that of C-type lectin 1 from Bitis gabonica (Gaboon adder).